A 260-amino-acid polypeptide reads, in one-letter code: MMETALLRYCVNFSGHKKISAHQRSNSEIPKTSPGGCEDEWCARVLSRRSVMASGLVSSTTALAFPREGLAVVKQGLLAGRVPGLSEPDEEGWRTYRRPDEKSGGHGVGWSPIIPYAFSVPQDWNEVPVSIADLGGTEIDLRFASPKEGRLSVIVAPVLRFADNLGDDVKIENIGQPAKVINAFGPEVIGENVEGKVLSSNVAEHDGRLYYQFELEPPHVLITATAAGNRLYLFSVTGNGLQWKRHYKDLKRIASSFRIV.

Belongs to the PsbP family.

The protein resides in the plastid. Its subcellular location is the chloroplast thylakoid lumen. The polypeptide is PsbP domain-containing protein 4, chloroplastic (PPD4) (Arabidopsis thaliana (Mouse-ear cress)).